The primary structure comprises 2359 residues: Neuron navigator 3 (2359 aa).

One can recognise a Calponin-homology (CH) domain in the interval 77-184 (IEDSKIYTDW…LFFSLSRYKQ (108 aa)). Composition is skewed to polar residues over residues 204-226 (THTA…SSLT), 233-243 (SKHSGIATSQK), 257-279 (ASSS…FNSI), and 300-317 (QPSS…TSGQ). Disordered regions lie at residues 204-623 (THTA…QQQH) and 641-660 (ENEG…TKMD). The segment covering 318-329 (PPASAIPSPSAS) has biased composition (low complexity). Positions 335 to 352 (KSMNVKHSATSTMLTVKQ) are enriched in polar residues. Low complexity-rich tracts occupy residues 353-363 (PSPATSPTPSS) and 427-439 (NSGL…TNSS). Residues 465 to 491 (PKEKEEKTRDKNKACAEKSGKEEKDQV) are compositionally biased toward basic and acidic residues. Residues 522–536 (IPSSSGIPKPGSKVP) show a composition bias toward low complexity. The span at 592-623 (ASPSSSCVMQVTHSSGQSPGNGAVQLPQQQQH) shows a compositional bias: polar residues. Residues 680-708 (EARRMRTVKNIADLRQNLEETMSSLRGTQ) are a coiled coil. Disordered stretches follow at residues 878 to 1315 (ADSW…SPLF), 1413 to 1472 (LSES…AMSS), 1653 to 1758 (GALN…KPSQ), and 1829 to 1855 (ETGN…SRQS). Low complexity-rich tracts occupy residues 883–896 (DSSS…DTLD) and 904–916 (NTTS…SNIT). Over residues 917-926 (VPSRKNTQLK) the composition is skewed to polar residues. A compositionally biased stretch (basic and acidic residues) spans 943 to 960 (EELKKAEGDCDSHGDGAA). Composition is skewed to polar residues over residues 978-989 (QKASLSVSQTGS) and 997-1013 (QGGT…TSAL). Over residues 1017 to 1029 (GKTDDAKASEKGK) the composition is skewed to basic and acidic residues. 2 stretches are compositionally biased toward low complexity: residues 1077–1095 (GAST…GSAT) and 1160–1173 (SSTS…SSKS). The segment covering 1190 to 1199 (GRSSPVTVNQ) has biased composition (polar residues). 3 stretches are compositionally biased toward low complexity: residues 1209 to 1229 (VSDS…TSAS), 1256 to 1266 (GAKAGGKSASA), and 1274 to 1285 (SSSVVLSPSTSL). The span at 1299-1308 (GSMGSAGGLS) shows a compositional bias: gly residues. A compositionally biased stretch (basic and acidic residues) spans 1439-1448 (NQEEGKEWLR). A compositionally biased stretch (polar residues) spans 1449–1461 (SHSTGGLQDTGNQ). S1462 and S1466 each carry phosphoserine. Residues 1462 to 1472 (SPLVSPSAMSS) show a composition bias toward low complexity. Residues 1565-1656 (AEEKAHSEQI…AQAAIQGALN (92 aa)) are a coiled coil. 2 stretches are compositionally biased toward low complexity: residues 1675 to 1692 (SVSS…GSGN) and 1749 to 1758 (SGSSSMKPSQ). Residues 1768–1835 (EAEAEIILQL…LKAETGNTAK (68 aa)) adopt a coiled-coil conformation. Residues 1841–1855 (SDSSSTASSSSSRQS) show a composition bias toward low complexity.

Belongs to the Nav/unc-53 family. As to expression, present in neurons from central and peripheral nervous systems (at protein level). Highly expressed in brain cortex, midbrain, cerebellum and hippocampus.

Its subcellular location is the nucleus outer membrane. Functionally, plays a role in cell migration. May be involved in neuron regeneration. May regulate IL2 production by T-cells. This Mus musculus (Mouse) protein is Neuron navigator 3 (Nav3).